The following is a 358-amino-acid chain: Protein Wnt-8 (358 aa).

Residues 1–22 (MQNTTLFILATLLIFCPFFTAS) form the signal peptide. Cysteines 55 and 66 form a disulfide. An N-linked (GlcNAc...) asparagine glycan is attached at Asn104. Disulfide bonds link Cys105–Cys113, Cys115–Cys133, Cys181–Cys195, Cys183–Cys190, Cys260–Cys298, Cys276–Cys291, Cys295–Cys337, Cys313–Cys328, Cys315–Cys325, and Cys320–Cys321. The O-palmitoleoyl serine moiety is linked to residue Ser187. N-linked (GlcNAc...) asparagine glycans are attached at residues Asn263 and Asn282.

It belongs to the Wnt family. In terms of assembly, homooligomer; disulfide-linked, leading to inactivation. Interacts with the long chain of cer1. Palmitoleoylation is required for efficient binding to frizzled receptors. Depalmitoleoylation leads to Wnt signaling pathway inhibition. Post-translationally, proteolytic processing by tiki1 and tiki2 promotes oxidation and formation of large disulfide-bond oligomers, leading to inactivation of wnt8.

The protein localises to the secreted. It localises to the extracellular space. It is found in the extracellular matrix. Ligand for members of the frizzled family of seven transmembrane receptors. Plays a role in ventral mesodermal patterning during embryogenesis. Mimics Nieuwkoop center activity. Causes dorsal mesodermal differentiation of animal cap ectoderm when coexpressed with noggin and nuclear, sequence-specific DNA-binding protein xBra. None of these molecules causes dorsal mesoderm formation when expressed alone. The sequence is that of Protein Wnt-8 (wnt8) from Xenopus laevis (African clawed frog).